The sequence spans 327 residues: Transaldolase (327 aa).

The active-site Schiff-base intermediate with substrate is Lys132.

This sequence belongs to the transaldolase family. Type 1 subfamily.

It localises to the cytoplasm. The catalysed reaction is D-sedoheptulose 7-phosphate + D-glyceraldehyde 3-phosphate = D-erythrose 4-phosphate + beta-D-fructose 6-phosphate. Its pathway is carbohydrate degradation; pentose phosphate pathway; D-glyceraldehyde 3-phosphate and beta-D-fructose 6-phosphate from D-ribose 5-phosphate and D-xylulose 5-phosphate (non-oxidative stage): step 2/3. In terms of biological role, transaldolase is important for the balance of metabolites in the pentose-phosphate pathway. In Chlamydia muridarum (strain MoPn / Nigg), this protein is Transaldolase.